Consider the following 1645-residue polypeptide: Protein MON2 homolog (1645 aa).

Belongs to the MON2 family.

Its function is as follows. May be required for traffic between late Golgi and early endosomes. The sequence is that of Protein MON2 homolog from Caenorhabditis briggsae.